The chain runs to 227 residues: Pyridoxine-5'-phosphate oxidase (227 aa).

20–23 is a pyridoxal 5'-phosphate binding site; sequence RKDY. Residue 75-78 coordinates FMN; that stretch reads RVVL. Pyridoxal 5'-phosphate is bound at residue Lys80. FMN-binding positions include 90-91, 96-97, and Gln117; these read YT and RK. Pyridoxal 5'-phosphate-binding residues include Tyr135, Arg139, and Ser143. Residues 152 to 153 and Trp197 contribute to the FMN site; that span reads FQ. Pyridoxal 5'-phosphate is bound at residue 203–205; that stretch reads RIH. Arg207 lines the FMN pocket.

The protein belongs to the pyridoxamine 5'-phosphate oxidase family. In terms of assembly, homodimer. The cofactor is FMN.

It carries out the reaction pyridoxamine 5'-phosphate + O2 + H2O = pyridoxal 5'-phosphate + H2O2 + NH4(+). It catalyses the reaction pyridoxine 5'-phosphate + O2 = pyridoxal 5'-phosphate + H2O2. The protein operates within cofactor metabolism; pyridoxal 5'-phosphate salvage; pyridoxal 5'-phosphate from pyridoxamine 5'-phosphate: step 1/1. It functions in the pathway cofactor metabolism; pyridoxal 5'-phosphate salvage; pyridoxal 5'-phosphate from pyridoxine 5'-phosphate: step 1/1. Its function is as follows. Catalyzes the oxidation of either pyridoxine 5'-phosphate (PNP) or pyridoxamine 5'-phosphate (PMP) into pyridoxal 5'-phosphate (PLP). The chain is Pyridoxine-5'-phosphate oxidase (pnpo) from Dictyostelium discoideum (Social amoeba).